Here is a 192-residue protein sequence, read N- to C-terminus: Pyridoxal 5'-phosphate synthase subunit PdxT (192 aa).

46 to 48 (GES) contacts L-glutamine. Residue cysteine 76 is the Nucleophile of the active site. L-glutamine is bound by residues arginine 103 and 131–132 (IR). Active-site charge relay system residues include histidine 167 and glutamate 169.

The protein belongs to the glutaminase PdxT/SNO family. As to quaternary structure, in the presence of PdxS, forms a dodecamer of heterodimers. Only shows activity in the heterodimer.

It carries out the reaction aldehydo-D-ribose 5-phosphate + D-glyceraldehyde 3-phosphate + L-glutamine = pyridoxal 5'-phosphate + L-glutamate + phosphate + 3 H2O + H(+). The catalysed reaction is L-glutamine + H2O = L-glutamate + NH4(+). It functions in the pathway cofactor biosynthesis; pyridoxal 5'-phosphate biosynthesis. In terms of biological role, catalyzes the hydrolysis of glutamine to glutamate and ammonia as part of the biosynthesis of pyridoxal 5'-phosphate. The resulting ammonia molecule is channeled to the active site of PdxS. The sequence is that of Pyridoxal 5'-phosphate synthase subunit PdxT from Koribacter versatilis (strain Ellin345).